Reading from the N-terminus, the 160-residue chain is MGVFTYETEFTSVIPPPRLYKAFVLDTDNLIPKIAPQAVKSTELVQGDGGVGTIKKIHLGEGSEYSYVKHQIDGLDKDNFVYNYSIIEGDAIGDKVEKISYEIKLVASPSGGSIIKSTSHYHCKGEVEIKEEHVKAGKERAAGLFKIIENYLLGNPDAYN.

Belongs to the BetVI family. Post-translationally, phosphorylated in vivo. Phosphorylation prevents its activity as ribonuclease. Highly expressed in roots. Expressed a low levels in ripe red fruits.

Its function is as follows. Possesses ribonuclease activity in vitro. This chain is Major strawberry allergen Fra a 1.07, found in Fragaria ananassa (Strawberry).